The sequence spans 451 residues: UDP-N-acetylmuramoylalanine--D-glutamate ligase (451 aa).

119–125 (GSNGKTT) is a binding site for ATP.

It belongs to the MurCDEF family.

The protein resides in the cytoplasm. It carries out the reaction UDP-N-acetyl-alpha-D-muramoyl-L-alanine + D-glutamate + ATP = UDP-N-acetyl-alpha-D-muramoyl-L-alanyl-D-glutamate + ADP + phosphate + H(+). The protein operates within cell wall biogenesis; peptidoglycan biosynthesis. Its function is as follows. Cell wall formation. Catalyzes the addition of glutamate to the nucleotide precursor UDP-N-acetylmuramoyl-L-alanine (UMA). The sequence is that of UDP-N-acetylmuramoylalanine--D-glutamate ligase from Streptococcus agalactiae serotype III (strain NEM316).